Reading from the N-terminus, the 219-residue chain is Protein GrpE (219 aa).

Disordered stretches follow at residues 1 to 32 and 59 to 87; these read MSTT…LDAT and FDGV…AERT.

This sequence belongs to the GrpE family. Homodimer.

It is found in the cytoplasm. Participates actively in the response to hyperosmotic and heat shock by preventing the aggregation of stress-denatured proteins, in association with DnaK and GrpE. It is the nucleotide exchange factor for DnaK and may function as a thermosensor. Unfolded proteins bind initially to DnaJ; upon interaction with the DnaJ-bound protein, DnaK hydrolyzes its bound ATP, resulting in the formation of a stable complex. GrpE releases ADP from DnaK; ATP binding to DnaK triggers the release of the substrate protein, thus completing the reaction cycle. Several rounds of ATP-dependent interactions between DnaJ, DnaK and GrpE are required for fully efficient folding. In Corynebacterium diphtheriae (strain ATCC 700971 / NCTC 13129 / Biotype gravis), this protein is Protein GrpE.